The following is a 35-amino-acid chain: Potassium channel toxin alpha-KTx 6.1 (35 aa).

Intrachain disulfides connect cysteine 4/cysteine 25, cysteine 10/cysteine 30, cysteine 14/cysteine 32, and cysteine 20/cysteine 35.

The protein belongs to the short scorpion toxin superfamily. Potassium channel inhibitor family. Alpha-KTx 06 subfamily. Expressed by the venom gland.

Its subcellular location is the secreted. In terms of biological role, potently and reversibly inhibits the insect voltage-gated Shaker (Sh) potassium channel (isoform alpha (B)), the mammalian voltage-gated potassium channels Kv1.2/KCNA2 (IC(50)=0.44 nM), and the calcium-activated potassium channel KCa2.3/KCNN3 (Kd=330 nM). Its effect on Kv1.3/KCNA3 is controversial, since this channel is voltage-independently inhibited in PubMed:9464266, but is not affected in PubMed:10931199. Furthermore, this toxin competes with apamin (a small conductance calcium-activated potassium channel inhibitor) for binding to rat brain synaptosomes. This is Potassium channel toxin alpha-KTx 6.1 from Pandinus imperator (Emperor scorpion).